We begin with the raw amino-acid sequence, 402 residues long: Nodulation protein E (402 aa).

The 400-residue stretch at 2–401 (DRRVVITGMG…GTNAVLAFKQ (400 aa)) folds into the Ketosynthase family 3 (KS3) domain. Active-site for beta-ketoacyl synthase activity residues include Cys162, His294, and His331. The chain crosses the membrane as a helical span at residues 329–348 (HAHCIGAASALEMIACVMAI).

This sequence belongs to the thiolase-like superfamily. Beta-ketoacyl-ACP synthases family.

It is found in the cell inner membrane. Its function is as follows. Proposed to synthesize NOD factor fatty acyl chain. Involved in the synthesis of a highly unsaturated fatty acid moiety, which forms part of a lipo-oligosaccharide that is responsible for host specificity. The sequence is that of Nodulation protein E (nodE) from Rhizobium meliloti (strain 1021) (Ensifer meliloti).